The primary structure comprises 156 residues: MMVLEKEDGVPMLSVQPKGKQKGCAGCNRKIKDRYLLKALDKYWHEDCLKCACCDCRLGEVGSTLYTKANLILCRRDYLRLFGTTGNCAACSKLIPAFEMVMRARDNVYHLDCFACQLCNQRFCVGDKFFLKNNMILCQMDYEEGQLNGSFDSQVQ.

LIM zinc-binding domains follow at residues 22 to 84 and 86 to 148; these read KGCA…LFGT and GNCA…GQLN.

The protein localises to the nucleus. Its function is as follows. May be involved in gene regulation within neural lineage cells potentially by direct DNA binding or by binding to other transcription factors. This is Rhombotin-1 from Xenopus laevis (African clawed frog).